The following is a 257-amino-acid chain: 5'-nucleotidase SurE (257 aa).

Positions 8, 9, 39, and 87 each coordinate a divalent metal cation. Residues 234-257 (VSPLTAPHPTTGHEGLAGLAEKYQ) form a disordered region.

This sequence belongs to the SurE nucleotidase family. Requires a divalent metal cation as cofactor.

The protein resides in the cytoplasm. It catalyses the reaction a ribonucleoside 5'-phosphate + H2O = a ribonucleoside + phosphate. Functionally, nucleotidase that shows phosphatase activity on nucleoside 5'-monophosphates. This is 5'-nucleotidase SurE from Natronomonas pharaonis (strain ATCC 35678 / DSM 2160 / CIP 103997 / JCM 8858 / NBRC 14720 / NCIMB 2260 / Gabara) (Halobacterium pharaonis).